The following is a 375-amino-acid chain: Neutral protease 2 homolog MGYG_00813 (375 aa).

Positions 1–19 are cleaved as a signal peptide; the sequence is MQVIVALAALSSLAAPALG. A propeptide spanning residues 20–190 is cleaved from the precursor; the sequence is FSIPRGVPVS…SGPLTRIGKR (171 aa). 2 disulfides stabilise this stretch: cysteine 198–cysteine 268 and cysteine 275–cysteine 293. Zn(2+) is bound at residue histidine 318. Glutamate 319 is an active-site residue. Histidine 322 and aspartate 333 together coordinate Zn(2+).

Belongs to the peptidase M35 family. Zn(2+) serves as cofactor.

Its subcellular location is the secreted. The catalysed reaction is Preferential cleavage of bonds with hydrophobic residues in P1'. Also 3-Asn-|-Gln-4 and 8-Gly-|-Ser-9 bonds in insulin B chain.. Functionally, secreted metalloproteinase that allows assimilation of proteinaceous substrates. Shows high activities on basic nuclear substrates such as histone and protamine. May be involved in virulence. The sequence is that of Neutral protease 2 homolog MGYG_00813 from Arthroderma gypseum (strain ATCC MYA-4604 / CBS 118893) (Microsporum gypseum).